The primary structure comprises 393 residues: Ig gamma-1 chain C region, membrane-bound form (393 aa).

The interval A1–I97 is CH1. C27 and C82 are disulfide-bonded. The segment at V98–T110 is hinge. Residues V111–K217 form a CH2 region. Intrachain disulfides connect C138–C198 and C244–C302. An N-linked (GlcNAc...) asparagine glycan is attached at N174. A CH3 region spans residues G218–L324. A helical transmembrane segment spans residues G340–C357. Topologically, residues Y358–P393 are cytoplasmic.

The protein localises to the cell membrane. The polypeptide is Ig gamma-1 chain C region, membrane-bound form (Ighg1) (Mus musculus (Mouse)).